The sequence spans 257 residues: Deoxyribose-phosphate aldolase (257 aa).

Catalysis depends on aspartate 102, which acts as the Proton donor/acceptor. Lysine 166 acts as the Schiff-base intermediate with acetaldehyde in catalysis. The active-site Proton donor/acceptor is the lysine 198.

It belongs to the DeoC/FbaB aldolase family. DeoC type 2 subfamily.

The protein localises to the cytoplasm. It catalyses the reaction 2-deoxy-D-ribose 5-phosphate = D-glyceraldehyde 3-phosphate + acetaldehyde. The protein operates within carbohydrate degradation; 2-deoxy-D-ribose 1-phosphate degradation; D-glyceraldehyde 3-phosphate and acetaldehyde from 2-deoxy-alpha-D-ribose 1-phosphate: step 2/2. Catalyzes a reversible aldol reaction between acetaldehyde and D-glyceraldehyde 3-phosphate to generate 2-deoxy-D-ribose 5-phosphate. This is Deoxyribose-phosphate aldolase from Aeromonas hydrophila subsp. hydrophila (strain ATCC 7966 / DSM 30187 / BCRC 13018 / CCUG 14551 / JCM 1027 / KCTC 2358 / NCIMB 9240 / NCTC 8049).